A 335-amino-acid chain; its full sequence is Glyceraldehyde-3-phosphate dehydrogenase 2 (335 aa).

NAD(+) contacts are provided by residues 13-14, Asp35, and Arg80; that span reads RI. A phosphoserine mark is found at Ser125 and Ser151. Residue 151-153 coordinates D-glyceraldehyde 3-phosphate; it reads SCT. The Nucleophile role is filled by Cys152. 4 positions are modified to phosphothreonine: Thr153, Thr154, Thr182, and Thr184. A D-glyceraldehyde 3-phosphate-binding site is contributed by Thr182. Residues Ser192, Ser203, and Ser209 each carry the phosphoserine modification. Position 211 is a phosphothreonine (Thr211). Residues 211–212 and Arg234 contribute to the D-glyceraldehyde 3-phosphate site; that span reads TG. Position 237 is a phosphothreonine (Thr237). At Ser241 the chain carries Phosphoserine. Residue Asn316 participates in NAD(+) binding.

It belongs to the glyceraldehyde-3-phosphate dehydrogenase family. Homotetramer.

The protein localises to the cytoplasm. The catalysed reaction is D-glyceraldehyde 3-phosphate + phosphate + NAD(+) = (2R)-3-phospho-glyceroyl phosphate + NADH + H(+). Its pathway is carbohydrate degradation; glycolysis; pyruvate from D-glyceraldehyde 3-phosphate: step 1/5. The protein is Glyceraldehyde-3-phosphate dehydrogenase 2 (gpd3) of Schizosaccharomyces pombe (strain 972 / ATCC 24843) (Fission yeast).